A 560-amino-acid polypeptide reads, in one-letter code: 5'-nucleotidase (560 aa).

An N-terminal signal peptide occupies residues 1–21 (MNQRLIIKTALSAAILASLAG). The N-palmitoyl cysteine moiety is linked to residue C22. C22 is lipidated: S-diacylglycerol cysteine. Residues D45, H47, D88, N120, H221, H256, and Q258 each contribute to the a divalent metal cation site. Residues F432 and 501-507 (YNASGGD) each bind substrate.

Belongs to the 5'-nucleotidase family. Chloride serves as cofactor. Mg(2+) is required as a cofactor.

It localises to the cell outer membrane. It catalyses the reaction a ribonucleoside 5'-phosphate + H2O = a ribonucleoside + phosphate. Functionally, degradation of extracellular 5'-nucleotides for nutritional needs. The polypeptide is 5'-nucleotidase (nutA) (Vibrio parahaemolyticus serotype O3:K6 (strain RIMD 2210633)).